Here is an 88-residue protein sequence, read N- to C-terminus: Exodeoxyribonuclease 7 small subunit (88 aa).

The disordered stretch occupies residues 68–88 (SDPMHPDDGEPFDPSLVSTSQ).

This sequence belongs to the XseB family. Heterooligomer composed of large and small subunits.

The protein localises to the cytoplasm. The enzyme catalyses Exonucleolytic cleavage in either 5'- to 3'- or 3'- to 5'-direction to yield nucleoside 5'-phosphates.. In terms of biological role, bidirectionally degrades single-stranded DNA into large acid-insoluble oligonucleotides, which are then degraded further into small acid-soluble oligonucleotides. The chain is Exodeoxyribonuclease 7 small subunit from Xylella fastidiosa (strain 9a5c).